The primary structure comprises 89 residues: Large ribosomal subunit protein bL28 (89 aa).

It belongs to the bacterial ribosomal protein bL28 family.

The protein is Large ribosomal subunit protein bL28 of Chlamydia felis (strain Fe/C-56) (Chlamydophila felis).